A 142-amino-acid chain; its full sequence is ATP synthase epsilon chain (142 aa).

This sequence belongs to the ATPase epsilon chain family. In terms of assembly, F-type ATPases have 2 components, CF(1) - the catalytic core - and CF(0) - the membrane proton channel. CF(1) has five subunits: alpha(3), beta(3), gamma(1), delta(1), epsilon(1). CF(0) has three main subunits: a, b and c.

It localises to the cell inner membrane. Produces ATP from ADP in the presence of a proton gradient across the membrane. The protein is ATP synthase epsilon chain of Actinobacillus succinogenes (strain ATCC 55618 / DSM 22257 / CCUG 43843 / 130Z).